The following is a 172-amino-acid chain: Shikimate kinase (172 aa).

14–19 (GAGKST) provides a ligand contact to ATP. Mg(2+) is bound at residue Ser18. Positions 36, 60, and 82 each coordinate substrate. An ATP-binding site is contributed by Arg120. Arg139 contributes to the substrate binding site. Residue Gln156 coordinates ATP.

It belongs to the shikimate kinase family. Monomer. Mg(2+) is required as a cofactor.

The protein resides in the cytoplasm. The catalysed reaction is shikimate + ATP = 3-phosphoshikimate + ADP + H(+). It functions in the pathway metabolic intermediate biosynthesis; chorismate biosynthesis; chorismate from D-erythrose 4-phosphate and phosphoenolpyruvate: step 5/7. Functionally, catalyzes the specific phosphorylation of the 3-hydroxyl group of shikimic acid using ATP as a cosubstrate. In Vibrio parahaemolyticus serotype O3:K6 (strain RIMD 2210633), this protein is Shikimate kinase.